The primary structure comprises 1102 residues: Putative ISWI chromatin-remodeling complex subunit YPL216W (1102 aa).

The WAC domain occupies 23–131 (ETPWVIKESS…DTVCLKTIQK (109 aa)). The interval 271–301 (ELYTPLTIPPESDVEPADWKETSETSETSET) is disordered. The region spanning 375–435 (QFPTERLLVV…FLKTYNSKGS (61 aa)) is the DDT domain. Positions 673–743 (CNGIRLKLDS…EDIAFLEAKL (71 aa)) form a coiled coil.

It is found in the nucleus. Functionally, may be required for the activity of an ISWI chromatin-remodeling complex. The protein is Putative ISWI chromatin-remodeling complex subunit YPL216W of Saccharomyces cerevisiae (strain ATCC 204508 / S288c) (Baker's yeast).